Here is a 241-residue protein sequence, read N- to C-terminus: Co-chaperone protein p23-1 (241 aa).

A CS domain is found at 2-91; that stretch reads SRHPEVKWAE…AEPERWNKLL (90 aa). 17 MGG repeats span residues 129–131, 132–134, 135–137, 138–140, 141–143, 144–146, 147–149, 150–152, 162–164, 165–167, 168–170, 171–173, 180–182, 183–185, 186–188, 189–191, and 192–194; these read MGG. The tract at residues 129–194 is 17 X 3 AA repeats of M-G-G; sequence MGGMGGMGGM…GMGGMGGMGG (66 aa). A disordered region spans residues 188–241; that stretch reads GMGGMGGMEEFEDSDDEEETAKSGDKKDDAVKEEGLATEKAPAAEETTSVKEDK. The span at 196–206 shows a compositional bias: acidic residues; the sequence is EEFEDSDDEEE. Over residues 207–224 the composition is skewed to basic and acidic residues; sequence TAKSGDKKDDAVKEEGLA. Positions 225-234 are enriched in low complexity; the sequence is TEKAPAAEET.

It belongs to the p23/wos2 family. In terms of assembly, interacts with HSP90 in an ATP-dependent manner. Interacts with HSP90-5, HSP90-6 and HSP90-7. In terms of tissue distribution, widely expressed but preferentially in the root meristem.

It is found in the cytoplasm. The protein localises to the nucleus. Functionally, acts as a co-chaperone for HSP90. Controls root development through the modulation of auxin distribution in the root meristem. The chain is Co-chaperone protein p23-1 from Arabidopsis thaliana (Mouse-ear cress).